Consider the following 296-residue polypeptide: Cbb3-type cytochrome c oxidase subunit CcoP (296 aa).

Residues 1 to 31 (MAQNYKDELSGVETTGHEWDGLRELNNPLPK) lie on the Cytoplasmic side of the membrane. Residues 32–52 (WWLYLFYVCIAWAMVYYVFYP) traverse the membrane as a helical segment. The Periplasmic portion of the chain corresponds to 53 to 296 (AWPLGKTYTK…VYVHNLGGGK (244 aa)). Cytochrome c domains are found at residues 108-200 (FAMA…LSLN) and 207-293 (GKVA…HNLG). 8 residues coordinate heme c: Cys121, Cys124, His125, Met175, Cys220, Cys223, His224, and Met270.

The protein belongs to the CcoP / FixP family. In terms of assembly, component of the cbb3-type cytochrome c oxidase at least composed of CcoN, CcoO, CcoQ and CcoP. The cofactor is heme c.

The protein localises to the cell inner membrane. Its pathway is energy metabolism; oxidative phosphorylation. Functionally, C-type cytochrome. Part of the cbb3-type cytochrome c oxidase complex. CcoP subunit is required for transferring electrons from donor cytochrome c via its heme groups to CcoO subunit. From there, electrons are shuttled to the catalytic binuclear center of CcoN subunit where oxygen reduction takes place. The complex also functions as a proton pump. This chain is Cbb3-type cytochrome c oxidase subunit CcoP, found in Azospirillum sp. (strain B510).